Reading from the N-terminus, the 420-residue chain is 2',3'-cyclic-nucleotide 3'-phosphodiesterase (420 aa).

A Phosphoserine modification is found at serine 9. Phosphotyrosine is present on tyrosine 110. A phosphoserine mark is found at serine 169, serine 227, and serine 239. Histidine 250 functions as the Proton acceptor in the catalytic mechanism. Threonine 252 serves as a coordination point for substrate. Threonine 262 carries the phosphothreonine modification. Catalysis depends on histidine 329, which acts as the Proton donor. A substrate-binding site is contributed by threonine 331. At serine 358 the chain carries Phosphoserine. Cysteine 417 carries the cysteine methyl ester modification. A lipid anchor (S-farnesyl cysteine) is attached at cysteine 417. Residues 418–420 (TII) constitute a propeptide, removed in mature form.

Belongs to the 2H phosphoesterase superfamily. CNPase family. As to quaternary structure, exists as monomers and homodimers.

Its subcellular location is the membrane. The protein resides in the melanosome. The enzyme catalyses a nucleoside 2',3'-cyclic phosphate + H2O = a nucleoside 2'-phosphate + H(+). Functionally, catalyzes the formation of 2'-nucleotide products from 2',3'-cyclic substrates. May participate in RNA metabolism in the myelinating cell, CNP is the third most abundant protein in central nervous system myelin. The chain is 2',3'-cyclic-nucleotide 3'-phosphodiesterase from Rattus norvegicus (Rat).